The sequence spans 488 residues: Glutamyl-tRNA(Gln) amidotransferase subunit B, mitochondrial (488 aa).

Belongs to the GatB/GatE family. GatB subfamily. As to quaternary structure, subunit of the heterotrimeric GatFAB amidotransferase (AdT) complex, composed of A, B and F subunits.

The protein localises to the mitochondrion. It catalyses the reaction L-glutamyl-tRNA(Gln) + L-glutamine + ATP + H2O = L-glutaminyl-tRNA(Gln) + L-glutamate + ADP + phosphate + H(+). Its function is as follows. Allows the formation of correctly charged Gln-tRNA(Gln) through the transamidation of misacylated Glu-tRNA(Gln) in the mitochondria. The reaction takes place in the presence of glutamine and ATP through an activated gamma-phospho-Glu-tRNA(Gln). This is Glutamyl-tRNA(Gln) amidotransferase subunit B, mitochondrial from Candida albicans (strain SC5314 / ATCC MYA-2876) (Yeast).